The primary structure comprises 35 residues: SDTTAGSYAEALAELLTIDPSLIVTTVDTQLAVAG.

The polypeptide is Water stress-responsive protein 7 (Pinus pinaster (Maritime pine)).